Consider the following 328-residue polypeptide: Isopenicillin N synthase (328 aa).

Isopenicillin N is bound by residues arginine 85, tyrosine 89, serine 181, and tyrosine 187. Positions 85, 89, 181, 187, 210, and 212 each coordinate N-[(5S)-5-amino-5-carboxypentanoyl]-L-cysteinyl-D-valine. In terms of domain architecture, Fe2OG dioxygenase spans 178-284 (TLSSVSLIRY…RLSLPFFFHA (107 aa)). The Fe(2+) site is built by histidine 210, aspartate 212, and histidine 266. Arginine 275 is a binding site for 2-oxoglutarate. Residue serine 277 coordinates isopenicillin N. Serine 277 is a binding site for N-[(5S)-5-amino-5-carboxypentanoyl]-L-cysteinyl-D-valine.

The protein belongs to the iron/ascorbate-dependent oxidoreductase family. The cofactor is Fe cation. L-ascorbate is required as a cofactor.

The catalysed reaction is N-[(5S)-5-amino-5-carboxypentanoyl]-L-cysteinyl-D-valine + O2 = isopenicillin N + 2 H2O. Its pathway is antibiotic biosynthesis; penicillin G biosynthesis; penicillin G from L-alpha-aminoadipate and L-cysteine and L-valine: step 2/3. Functionally, removes, in the presence of oxygen, 4 hydrogen atoms from delta-L-(alpha-aminoadipyl)-L-cysteinyl-D-valine (ACV) to form the azetidinone and thiazolidine rings of isopenicillin. This chain is Isopenicillin N synthase (pcbC), found in Amycolatopsis lactamdurans (Nocardia lactamdurans).